The chain runs to 431 residues: uncharacterized protein (431 aa).

One can recognise a Peptidase S8 domain in the interval 1–258 (MPSQMREAIT…HGLIDLERAG (258 aa)).

This sequence belongs to the peptidase S8 family.

This is an uncharacterized protein from Sinorhizobium fredii (strain NBRC 101917 / NGR234).